A 177-amino-acid chain; its full sequence is Large ribosomal subunit protein uL6 (177 aa).

Belongs to the universal ribosomal protein uL6 family. As to quaternary structure, part of the 50S ribosomal subunit.

Functionally, this protein binds to the 23S rRNA, and is important in its secondary structure. It is located near the subunit interface in the base of the L7/L12 stalk, and near the tRNA binding site of the peptidyltransferase center. This Bartonella henselae (strain ATCC 49882 / DSM 28221 / CCUG 30454 / Houston 1) (Rochalimaea henselae) protein is Large ribosomal subunit protein uL6.